Here is a 66-residue protein sequence, read N- to C-terminus: Large ribosomal subunit protein bL33c (66 aa).

The protein belongs to the bacterial ribosomal protein bL33 family.

It localises to the plastid. The protein localises to the chloroplast. The polypeptide is Large ribosomal subunit protein bL33c (Saccharum officinarum (Sugarcane)).